Reading from the N-terminus, the 142-residue chain is Hemoglobin subunit theta-1 (142 aa).

A Globin domain is found at 2–142; it reads ALAAADRATV…VISALASDCR (141 aa). The heme b site is built by His59 and His88.

Belongs to the globin family.

This Equus caballus (Horse) protein is Hemoglobin subunit theta-1 (HBQ1).